The following is a 497-amino-acid chain: Probable cytosol aminopeptidase (497 aa).

Positions 267 and 272 each coordinate Mn(2+). The active site involves lysine 279. The Mn(2+) site is built by aspartate 290, aspartate 349, and glutamate 351. The active site involves arginine 353.

Belongs to the peptidase M17 family. The cofactor is Mn(2+).

It localises to the cytoplasm. It carries out the reaction Release of an N-terminal amino acid, Xaa-|-Yaa-, in which Xaa is preferably Leu, but may be other amino acids including Pro although not Arg or Lys, and Yaa may be Pro. Amino acid amides and methyl esters are also readily hydrolyzed, but rates on arylamides are exceedingly low.. It catalyses the reaction Release of an N-terminal amino acid, preferentially leucine, but not glutamic or aspartic acids.. Presumably involved in the processing and regular turnover of intracellular proteins. Catalyzes the removal of unsubstituted N-terminal amino acids from various peptides. This chain is Probable cytosol aminopeptidase, found in Pseudomonas putida (strain W619).